A 167-amino-acid polypeptide reads, in one-letter code: Ubiquitin-conjugating enzyme E2 15 (167 aa).

The UBC core domain maps to 5–165 (ASEQLLRKQL…VRRLVRRSIE (161 aa)). The active-site Glycyl thioester intermediate is Cys-90.

The protein belongs to the ubiquitin-conjugating enzyme family.

It carries out the reaction S-ubiquitinyl-[E1 ubiquitin-activating enzyme]-L-cysteine + [E2 ubiquitin-conjugating enzyme]-L-cysteine = [E1 ubiquitin-activating enzyme]-L-cysteine + S-ubiquitinyl-[E2 ubiquitin-conjugating enzyme]-L-cysteine.. It participates in protein modification; protein ubiquitination. Catalyzes the covalent attachment of ubiquitin to other proteins. Has a role in the formation of chromatin structures that influence the localization of transcriptional silencing factors. The polypeptide is Ubiquitin-conjugating enzyme E2 15 (ubc15) (Schizosaccharomyces pombe (strain 972 / ATCC 24843) (Fission yeast)).